Here is a 346-residue protein sequence, read N- to C-terminus: Methylthioribose-1-phosphate isomerase 1 (346 aa).

Substrate-binding positions include 48-50 (RGA), Arg-91, and Gln-196. Asp-237 acts as the Proton donor in catalysis. 247–248 (NK) contacts substrate.

The protein belongs to the eIF-2B alpha/beta/delta subunits family. MtnA subfamily.

The enzyme catalyses 5-(methylsulfanyl)-alpha-D-ribose 1-phosphate = 5-(methylsulfanyl)-D-ribulose 1-phosphate. Its pathway is amino-acid biosynthesis; L-methionine biosynthesis via salvage pathway; L-methionine from S-methyl-5-thio-alpha-D-ribose 1-phosphate: step 1/6. Catalyzes the interconversion of methylthioribose-1-phosphate (MTR-1-P) into methylthioribulose-1-phosphate (MTRu-1-P). In Pseudothermotoga lettingae (strain ATCC BAA-301 / DSM 14385 / NBRC 107922 / TMO) (Thermotoga lettingae), this protein is Methylthioribose-1-phosphate isomerase 1.